A 369-amino-acid polypeptide reads, in one-letter code: S-(hydroxymethyl)glutathione dehydrogenase (369 aa).

7 residues coordinate Zn(2+): C40, H62, C92, C95, C98, C106, and C169.

It belongs to the zinc-containing alcohol dehydrogenase family. Class-III subfamily. As to quaternary structure, homodimer. Zn(2+) serves as cofactor.

It is found in the cytoplasm. It carries out the reaction S-(hydroxymethyl)glutathione + NADP(+) = S-formylglutathione + NADPH + H(+). It catalyses the reaction S-(hydroxymethyl)glutathione + NAD(+) = S-formylglutathione + NADH + H(+). The catalysed reaction is a primary alcohol + NAD(+) = an aldehyde + NADH + H(+). The enzyme catalyses a secondary alcohol + NAD(+) = a ketone + NADH + H(+). It carries out the reaction S-nitrosoglutathione + NADH + H(+) = S-(hydroxysulfenamide)glutathione + NAD(+). Its function is as follows. Has high formaldehyde dehydrogenase activity in the presence of glutathione and catalyzes the oxidation of normal alcohols in a reaction that is not GSH-dependent. In addition, hemithiolacetals other than those formed from GSH, including omega-thiol fatty acids, also are substrates. Also acts as a S-nitroso-glutathione reductase by catalyzing the NADH-dependent reduction of S-nitrosoglutathione. In Photobacterium damsela subsp. piscicida (Pasteurella piscicida), this protein is S-(hydroxymethyl)glutathione dehydrogenase (frmA).